The chain runs to 432 residues: Enolase (432 aa).

Gln-163 is a (2R)-2-phosphoglycerate binding site. The active-site Proton donor is Glu-205. Mg(2+) is bound by residues Asp-242, Glu-285, and Asp-312. (2R)-2-phosphoglycerate-binding residues include Lys-337, Arg-366, Ser-367, and Lys-388. Lys-337 functions as the Proton acceptor in the catalytic mechanism.

Belongs to the enolase family. Requires Mg(2+) as cofactor.

It localises to the cytoplasm. The protein resides in the secreted. It is found in the cell surface. It catalyses the reaction (2R)-2-phosphoglycerate = phosphoenolpyruvate + H2O. It functions in the pathway carbohydrate degradation; glycolysis; pyruvate from D-glyceraldehyde 3-phosphate: step 4/5. Its function is as follows. Catalyzes the reversible conversion of 2-phosphoglycerate (2-PG) into phosphoenolpyruvate (PEP). It is essential for the degradation of carbohydrates via glycolysis. The protein is Enolase of Bifidobacterium adolescentis (strain ATCC 15703 / DSM 20083 / NCTC 11814 / E194a).